A 221-amino-acid chain; its full sequence is MEAGGFLDSLIYGACVVFTLGMFSAGLSDLRHMRMTRSVDNVQFLPFLTTEVNNLGWLSYGALKGDRILIVVNTVGAALQTLYILAYLHYCPRKRVVLLQTATLLGVLLLGYGYFWLLVPNPEARLQLLGLFCSVFTISMYLSPLADLAKVIQTKSTQCLSYPLTIATVLTSASWCLYGFRLRVPYIMVSNFPGIVTSFIRFWLFWKYPQEQDRNYWFLQT.

Transmembrane regions (helical) follow at residues alanine 3 to phenylalanine 23, valine 42 to alanine 62, isoleucine 68 to leucine 88, valine 96 to tryptophan 116, leucine 126 to alanine 146, leucine 160 to phenylalanine 180, and tyrosine 186 to tryptophan 206. Residues leucine 10–lysine 94 form the MtN3/slv 1 domain. One can recognise a MtN3/slv 2 domain in the interval glutamine 127–glutamine 212. Residues alanine 149 to threonine 221 form a mediates interaction with TRPV2 region.

Belongs to the SWEET sugar transporter family. In terms of assembly, interacts with TRPV2; the interaction probably occurs intracellularly and depends on TRPV2 N-glycosylation.

The protein localises to the golgi apparatus membrane. The protein resides in the cell membrane. Functionally, mediates sugar transport across membranes. May stimulate V(D)J recombination by the activation of RAG1. The chain is Sugar transporter SWEET1 (SLC50A1) from Papio anubis (Olive baboon).